Here is a 339-residue protein sequence, read N- to C-terminus: UDP-glucose 4-epimerase (339 aa).

Residues 12 to 13 (FI), 32 to 37 (DNLCNS), 59 to 60 (DI), 81 to 85 (FAGLK), asparagine 100, serine 125, tyrosine 150, lysine 154, and phenylalanine 179 contribute to the NAD(+) site. Substrate-binding residues include serine 125 and tyrosine 150. Tyrosine 150 serves as the catalytic Proton acceptor. Residues asparagine 180, 200-201 (NL), 217-219 (AVF), arginine 232, and 293-296 (RAGD) each bind substrate.

The protein belongs to the NAD(P)-dependent epimerase/dehydratase family. As to quaternary structure, homodimer. Requires NAD(+) as cofactor.

The catalysed reaction is UDP-alpha-D-glucose = UDP-alpha-D-galactose. Its pathway is carbohydrate metabolism; galactose metabolism. Functionally, involved in the metabolism of galactose. Plays an essential role in the incorporation of galactose into meningococcal lipopolysaccharide surface molecules, which are important for pathogenesis. Catalyzes the conversion of UDP-galactose (UDP-Gal) to UDP-glucose (UDP-Glc) through a mechanism involving the transient reduction of NAD. The sequence is that of UDP-glucose 4-epimerase (galE) from Neisseria meningitidis serogroup B (strain ATCC BAA-335 / MC58).